Here is a 122-residue protein sequence, read N- to C-terminus: Large ribosomal subunit protein uL14 (122 aa).

Belongs to the universal ribosomal protein uL14 family. As to quaternary structure, part of the 50S ribosomal subunit. Forms a cluster with proteins L3 and L19. In the 70S ribosome, L14 and L19 interact and together make contacts with the 16S rRNA in bridges B5 and B8.

Binds to 23S rRNA. Forms part of two intersubunit bridges in the 70S ribosome. This chain is Large ribosomal subunit protein uL14, found in Bacillus velezensis (strain DSM 23117 / BGSC 10A6 / LMG 26770 / FZB42) (Bacillus amyloliquefaciens subsp. plantarum).